Consider the following 463-residue polypeptide: Perilipin-5 (463 aa).

Residues Met1–Leu32 form a disordered region. The segment at Met1 to Gln123 is interaction with LIPE. The segment at Met1 to Leu188 is essential for lipid droplet targeting. A phosphoserine mark is found at Ser17, Ser163, and Ser337. Positions Ser17–Gly26 are enriched in polar residues. Residues Val200 to Phe463 form an interaction with PNPLA2 and ABHD5 region. The disordered stretch occupies residues Ala433–Phe463. Residues Gln444–Phe463 are necessary for mitochondria recruitment at the lipid droplet surface.

It belongs to the perilipin family. As to quaternary structure, homooligomer. Interacts with PNPLA2; prevents interaction of PNPLA2 with ABHD5. Interacts with ABHD5; targets ABHD5 to lipid droplets and promotes interaction of ABHD5 with PNPLA2. Interacts with LIPE. Phosphorylated by PKA. Phosphorylated on serine in skeletal muscle at rest or with lipolytic stimulation. As to expression, highly expressed in oxidative tissues, including heart, liver, brown adipose tissue (BAT) and slow-twitch fibers of skeletal muscle. Lower expression in epididymal white adipose tissue and anterior tibialis and quadriceps. Expressed in adrenal glands. Isoform 2 has the highest expression in heart.

Its subcellular location is the lipid droplet. It localises to the cytoplasm. It is found in the mitochondrion. Its function is as follows. Lipid droplet-associated protein that maintains the balance between lipogenesis and lipolysis and also regulates fatty acid oxidation in oxidative tissues. Recruits mitochondria to the surface of lipid droplets and is involved in lipid droplet homeostasis by regulating both the storage of fatty acids in the form of triglycerides and the release of fatty acids for mitochondrial fatty acid oxidation. In lipid droplet triacylglycerol hydrolysis, plays a role as a scaffolding protein for three major key lipolytic players: ABHD5, PNPLA2 and LIPE. Reduces the triacylglycerol hydrolase activity of PNPLA2 by recruiting and sequestering PNPLA2 to lipid droplets. Phosphorylation by PKA enables lipolysis probably by promoting release of ABHD5 from the perilipin scaffold and by facilitating interaction of ABHD5 with PNPLA2. Also increases lipolysis through interaction with LIPE and upon PKA-mediated phosphorylation of LIPE. The protein is Perilipin-5 (Plin5) of Mus musculus (Mouse).